A 249-amino-acid chain; its full sequence is Triosephosphate isomerase (249 aa).

11–13 (NWK) serves as a coordination point for substrate. The active-site Electrophile is the His-91. The active-site Proton acceptor is the Glu-163. Substrate contacts are provided by residues Gly-169, Ser-208, and 229-230 (GG).

The protein belongs to the triosephosphate isomerase family. Homodimer.

The protein localises to the cytoplasm. The catalysed reaction is D-glyceraldehyde 3-phosphate = dihydroxyacetone phosphate. It participates in carbohydrate biosynthesis; gluconeogenesis. Its pathway is carbohydrate degradation; glycolysis; D-glyceraldehyde 3-phosphate from glycerone phosphate: step 1/1. Involved in the gluconeogenesis. Catalyzes stereospecifically the conversion of dihydroxyacetone phosphate (DHAP) to D-glyceraldehyde-3-phosphate (G3P). The chain is Triosephosphate isomerase from Pseudoalteromonas translucida (strain TAC 125).